Consider the following 605-residue polypeptide: Terpenoid synthase 18 (605 aa).

Positions 356, 360, 500, 504, and 508 each coordinate Mg(2+). The short motif at 356–360 (DDTYD) is the DDXXD motif element.

Belongs to the terpene synthase family. Tpsa subfamily. The cofactor is Mg(2+). Mn(2+) serves as cofactor. In terms of tissue distribution, predominantly expressed in flowers and siliques but also in roots and leaves.

The protein resides in the cytoplasm. It participates in secondary metabolite biosynthesis; terpenoid biosynthesis. This is Terpenoid synthase 18 (TPS18) from Arabidopsis thaliana (Mouse-ear cress).